The sequence spans 211 residues: UPF0056 membrane protein BUsg_257 (211 aa).

The next 6 helical transmembrane spans lie at 14 to 34 (FFVSLCALVNPIGMIPIFTTM), 54 to 74 (AFIILLISLFAGNSILNAFGI), 76 to 96 (INSFRIAGGILIISIAFSMIS), 116 to 136 (VVPLAMPLIAGPGAISSTIVW), 144 to 164 (SDFLGCSIAIFLFAFVCWLCF), and 185 to 205 (IMGLLLMSLGIEFLSIGIKSI).

Belongs to the UPF0056 (MarC) family.

The protein resides in the cell membrane. The protein is UPF0056 membrane protein BUsg_257 of Buchnera aphidicola subsp. Schizaphis graminum (strain Sg).